Consider the following 287-residue polypeptide: Putative B3 domain-containing protein Os08g0157700 (287 aa).

Positions 17–29 (ATEEEEEEEEEEQ) are enriched in acidic residues. Residues 17–36 (ATEEEEEEEEEEQALGQEPA) form a disordered region. Positions 71 to 168 (FDKVVTPSDV…RYFIDYRHCH (98 aa)) form a DNA-binding region, TF-B3.

It is found in the nucleus. In Oryza sativa subsp. japonica (Rice), this protein is Putative B3 domain-containing protein Os08g0157700.